The following is a 145-amino-acid chain: D-aminoacyl-tRNA deacylase (145 aa).

Residues 137 to 138 (GP) carry the Gly-cisPro motif, important for rejection of L-amino acids motif.

It belongs to the DTD family. Homodimer.

The protein resides in the cytoplasm. The catalysed reaction is glycyl-tRNA(Ala) + H2O = tRNA(Ala) + glycine + H(+). The enzyme catalyses a D-aminoacyl-tRNA + H2O = a tRNA + a D-alpha-amino acid + H(+). Functionally, an aminoacyl-tRNA editing enzyme that deacylates mischarged D-aminoacyl-tRNAs. Also deacylates mischarged glycyl-tRNA(Ala), protecting cells against glycine mischarging by AlaRS. Acts via tRNA-based rather than protein-based catalysis; rejects L-amino acids rather than detecting D-amino acids in the active site. By recycling D-aminoacyl-tRNA to D-amino acids and free tRNA molecules, this enzyme counteracts the toxicity associated with the formation of D-aminoacyl-tRNA entities in vivo and helps enforce protein L-homochirality. The sequence is that of D-aminoacyl-tRNA deacylase from Pseudomonas savastanoi pv. phaseolicola (strain 1448A / Race 6) (Pseudomonas syringae pv. phaseolicola (strain 1448A / Race 6)).